The sequence spans 197 residues: Holliday junction branch migration complex subunit RuvA (197 aa).

The domain I stretch occupies residues 1-64 (MYEYIKGKYI…EDFIGVYGFL (64 aa)). A domain II region spans residues 65 to 143 (TKDELSMFKL…IDILEEDDEQ (79 aa)). Positions 144–148 (TINKV) are flexible linker. Residues 149–197 (TDDKKVLEAVAALITLGYSEKEANKVINSCDKNNSLEQIIKEALKYLMK) form a domain III region.

The protein belongs to the RuvA family. In terms of assembly, homotetramer. Forms an RuvA(8)-RuvB(12)-Holliday junction (HJ) complex. HJ DNA is sandwiched between 2 RuvA tetramers; dsDNA enters through RuvA and exits via RuvB. An RuvB hexamer assembles on each DNA strand where it exits the tetramer. Each RuvB hexamer is contacted by two RuvA subunits (via domain III) on 2 adjacent RuvB subunits; this complex drives branch migration. In the full resolvosome a probable DNA-RuvA(4)-RuvB(12)-RuvC(2) complex forms which resolves the HJ.

The protein resides in the cytoplasm. The RuvA-RuvB-RuvC complex processes Holliday junction (HJ) DNA during genetic recombination and DNA repair, while the RuvA-RuvB complex plays an important role in the rescue of blocked DNA replication forks via replication fork reversal (RFR). RuvA specifically binds to HJ cruciform DNA, conferring on it an open structure. The RuvB hexamer acts as an ATP-dependent pump, pulling dsDNA into and through the RuvAB complex. HJ branch migration allows RuvC to scan DNA until it finds its consensus sequence, where it cleaves and resolves the cruciform DNA. This chain is Holliday junction branch migration complex subunit RuvA, found in Clostridium botulinum (strain 657 / Type Ba4).